The chain runs to 877 residues: Putative ankyrin repeat protein R748 (877 aa).

ANK repeat units lie at residues 44–74 (IRHICLTGSYNNNQMSIMKILMNKFPKTINV), 79–109 (QNNTYLHQSIFNRHKIFVDFFMNELNDNINY), 115–145 (IGISHLHALVNYGYIDHIETAIIKDPGAIQQ), 202–231 (MGYRAIECAVRYCSTDVIDELISLGFSINE), 243–272 (NNNDLIGFATQIDRLDMVKHLINIGAPIHM), and 282–311 (LVPTCLVVAIKFKRDQCIHYLLNLPESIQA). Residues 525–579 (DSDEDPVCDSNESDNSNDINNHVKSDNKLNSSNDYYDEDDSEDNYNNQSDDEPLV) are disordered. The span at 533–544 (DSNESDNSNDIN) shows a compositional bias: low complexity.

In Acanthamoeba polyphaga mimivirus (APMV), this protein is Putative ankyrin repeat protein R748.